The sequence spans 341 residues: UDP-3-O-acylglucosamine N-acyltransferase (341 aa).

The Proton acceptor role is filled by His-239.

It belongs to the transferase hexapeptide repeat family. LpxD subfamily. In terms of assembly, homotrimer.

The catalysed reaction is a UDP-3-O-[(3R)-3-hydroxyacyl]-alpha-D-glucosamine + a (3R)-hydroxyacyl-[ACP] = a UDP-2-N,3-O-bis[(3R)-3-hydroxyacyl]-alpha-D-glucosamine + holo-[ACP] + H(+). The protein operates within bacterial outer membrane biogenesis; LPS lipid A biosynthesis. Catalyzes the N-acylation of UDP-3-O-acylglucosamine using 3-hydroxyacyl-ACP as the acyl donor. Is involved in the biosynthesis of lipid A, a phosphorylated glycolipid that anchors the lipopolysaccharide to the outer membrane of the cell. This chain is UDP-3-O-acylglucosamine N-acyltransferase, found in Shewanella sp. (strain MR-4).